The sequence spans 600 residues: NADH-quinone oxidoreductase subunit C/D (600 aa).

An NADH dehydrogenase I subunit C region spans residues 1 to 190; the sequence is MIDLMPKKNT…EPFFLNEQKE (190 aa). The NADH dehydrogenase I subunit D stretch occupies residues 214–600; sequence EFMFLNLGPN…IDFVMSDVDR (387 aa).

In the N-terminal section; belongs to the complex I 30 kDa subunit family. The protein in the C-terminal section; belongs to the complex I 49 kDa subunit family. As to quaternary structure, NDH-1 is composed of 13 different subunits. Subunits NuoB, CD, E, F, and G constitute the peripheral sector of the complex.

It is found in the cell membrane. The enzyme catalyses a quinone + NADH + 5 H(+)(in) = a quinol + NAD(+) + 4 H(+)(out). Its function is as follows. NDH-1 shuttles electrons from NADH, via FMN and iron-sulfur (Fe-S) centers, to quinones in the respiratory chain. The immediate electron acceptor for the enzyme in this species is believed to be ubiquinone. Couples the redox reaction to proton translocation (for every two electrons transferred, four hydrogen ions are translocated across the cytoplasmic membrane), and thus conserves the redox energy in a proton gradient. The sequence is that of NADH-quinone oxidoreductase subunit C/D from Buchnera aphidicola subsp. Acyrthosiphon pisum (strain 5A).